The following is a 36-amino-acid chain: Thrombin (36 aa).

The region spanning 19–36 is the Peptidase S1 domain; it reads IVKGIDAEVASAPMQVML.

The protein belongs to the peptidase S1 family. In terms of assembly, forms a heterodimer with SERPINA5. The gamma-carboxyglutamyl residues, which bind calcium ions, result from the carboxylation of glutamyl residues by a microsomal enzyme, the vitamin K-dependent carboxylase. The modified residues are necessary for the calcium-dependent interaction with a negatively charged phospholipid surface, which is essential for the conversion of prothrombin to thrombin. Post-translationally, N-glycosylated. As to expression, expressed by the liver and secreted in plasma.

It localises to the secreted. It catalyses the reaction Selective cleavage of Arg-|-Gly bonds in fibrinogen to form fibrin and release fibrinopeptides A and B.. Inhibited by SERPINA5. Thrombin, which cleaves bonds after Arg and Lys, converts fibrinogen to fibrin and activates factors V, VII, VIII, XIII, and, in complex with thrombomodulin, protein C. Functions in blood homeostasis, inflammation and wound healing. In Salmo salar (Atlantic salmon), this protein is Thrombin.